The following is a 110-amino-acid chain: Large ribosomal subunit protein uL22 (110 aa).

The span at 85–95 shows a compositional bias: basic residues; it reads RGTASKIRKPT. Residues 85 to 110 are disordered; sequence RGTASKIRKPTSHVMVEVSKAQKKEA.

Belongs to the universal ribosomal protein uL22 family. In terms of assembly, part of the 50S ribosomal subunit.

In terms of biological role, this protein binds specifically to 23S rRNA; its binding is stimulated by other ribosomal proteins, e.g. L4, L17, and L20. It is important during the early stages of 50S assembly. It makes multiple contacts with different domains of the 23S rRNA in the assembled 50S subunit and ribosome. The globular domain of the protein is located near the polypeptide exit tunnel on the outside of the subunit, while an extended beta-hairpin is found that lines the wall of the exit tunnel in the center of the 70S ribosome. The sequence is that of Large ribosomal subunit protein uL22 from Campylobacter curvus (strain 525.92).